The chain runs to 113 residues: DNA-directed RNA polymerase subunit Rpo4 (113 aa).

Belongs to the eukaryotic RPB4 RNA polymerase subunit family. As to quaternary structure, part of the 13-subunit RNA polymerase complex. Forms a stalk with Rpo7 that extends from the main structure.

The protein resides in the cytoplasm. The catalysed reaction is RNA(n) + a ribonucleoside 5'-triphosphate = RNA(n+1) + diphosphate. DNA-dependent RNA polymerase (RNAP) catalyzes the transcription of DNA into RNA using the four ribonucleoside triphosphates as substrates. This subunit is less well bound than the others. The chain is DNA-directed RNA polymerase subunit Rpo4 from Saccharolobus solfataricus (strain ATCC 35092 / DSM 1617 / JCM 11322 / P2) (Sulfolobus solfataricus).